The chain runs to 265 residues: MKIAIAGASGRMGRMLIEAVLNDSDAQLVGALDRAGSPFLGQDAGAFLGKETGVKLTDDLDAVFAQADYLIDFTRPEGTIAHVAAALRHDVKLVIGTTGFTAEQKAELQAAAARIGIVFAANMSVGVNVTLKLLEFAAKHFSHGYDIEIIEAHHRHKVDAPSGTALMMGEAVAGALGRSLEDCAVYGRHGVTGERDPSTIGFAAVRGGDIVGDHTVLFAGIGERIEITHKSSSRVSYAQGALRAVRFLSARGAGLFDMQDVLGLR.

NAD(+) contacts are provided by residues Gly7–Met12 and Asp33. Arg34 is a binding site for NADP(+). Residues Gly96–Thr98 and Ala120–Met123 each bind NAD(+). His153 acts as the Proton donor/acceptor in catalysis. His154 serves as a coordination point for (S)-2,3,4,5-tetrahydrodipicolinate. The active-site Proton donor is the Lys157. A (S)-2,3,4,5-tetrahydrodipicolinate-binding site is contributed by Gly163–Thr164.

The protein belongs to the DapB family.

Its subcellular location is the cytoplasm. The catalysed reaction is (S)-2,3,4,5-tetrahydrodipicolinate + NAD(+) + H2O = (2S,4S)-4-hydroxy-2,3,4,5-tetrahydrodipicolinate + NADH + H(+). The enzyme catalyses (S)-2,3,4,5-tetrahydrodipicolinate + NADP(+) + H2O = (2S,4S)-4-hydroxy-2,3,4,5-tetrahydrodipicolinate + NADPH + H(+). It participates in amino-acid biosynthesis; L-lysine biosynthesis via DAP pathway; (S)-tetrahydrodipicolinate from L-aspartate: step 4/4. Its function is as follows. Catalyzes the conversion of 4-hydroxy-tetrahydrodipicolinate (HTPA) to tetrahydrodipicolinate. This chain is 4-hydroxy-tetrahydrodipicolinate reductase, found in Burkholderia ambifaria (strain MC40-6).